A 195-amino-acid polypeptide reads, in one-letter code: Thymidine kinase (195 aa).

ATP-binding positions include 15 to 22 (GSMFSGKS) and 88 to 91 (DEVQ). E89 acts as the Proton acceptor in catalysis. Positions 145, 148, 183, and 186 each coordinate Zn(2+).

The protein belongs to the thymidine kinase family. As to quaternary structure, homotetramer.

The protein resides in the cytoplasm. The enzyme catalyses thymidine + ATP = dTMP + ADP + H(+). The protein is Thymidine kinase of Bacillus cereus (strain ZK / E33L).